The following is an 89-amino-acid chain: Small ribosomal subunit protein uS14A (89 aa).

Belongs to the universal ribosomal protein uS14 family. In terms of assembly, part of the 30S ribosomal subunit. Contacts proteins S3 and S10.

Its function is as follows. Binds 16S rRNA, required for the assembly of 30S particles and may also be responsible for determining the conformation of the 16S rRNA at the A site. The chain is Small ribosomal subunit protein uS14A from Listeria monocytogenes serotype 4b (strain F2365).